Here is a 967-residue protein sequence, read N- to C-terminus: Phosphoenolpyruvate carboxylase (967 aa).

Serine 11 bears the Phosphoserine mark. Residues histidine 172 and lysine 601 contribute to the active site.

The protein belongs to the PEPCase type 1 family. In terms of assembly, homotetramer. Mg(2+) is required as a cofactor.

It localises to the cytoplasm. The catalysed reaction is oxaloacetate + phosphate = phosphoenolpyruvate + hydrogencarbonate. The protein operates within photosynthesis; C3 acid pathway. With respect to regulation, by light-reversible phosphorylation. Its function is as follows. Through the carboxylation of phosphoenolpyruvate (PEP) it forms oxaloacetate, a four-carbon dicarboxylic acid source for the tricarboxylic acid cycle. This chain is Phosphoenolpyruvate carboxylase (PPCA1), found in Flaveria pringlei.